The chain runs to 391 residues: 8-amino-7-oxononanoate synthase (391 aa).

Position 108–109 (108–109) interacts with pyridoxal 5'-phosphate; that stretch reads GF. Histidine 133 provides a ligand contact to substrate. Serine 180, histidine 208, and threonine 236 together coordinate pyridoxal 5'-phosphate. At lysine 239 the chain carries N6-(pyridoxal phosphate)lysine. Threonine 353 provides a ligand contact to substrate.

It belongs to the class-II pyridoxal-phosphate-dependent aminotransferase family. BioF subfamily. In terms of assembly, homodimer. It depends on pyridoxal 5'-phosphate as a cofactor.

It carries out the reaction 6-carboxyhexanoyl-[ACP] + L-alanine + H(+) = (8S)-8-amino-7-oxononanoate + holo-[ACP] + CO2. It participates in cofactor biosynthesis; biotin biosynthesis. Catalyzes the decarboxylative condensation of pimeloyl-[acyl-carrier protein] and L-alanine to produce 8-amino-7-oxononanoate (AON), [acyl-carrier protein], and carbon dioxide. This Thermosipho melanesiensis (strain DSM 12029 / CIP 104789 / BI429) protein is 8-amino-7-oxononanoate synthase.